The primary structure comprises 406 residues: Acetylornithine/succinyldiaminopimelate aminotransferase (406 aa).

Pyridoxal 5'-phosphate-binding positions include 108 to 109 (GT) and Phe-141. A N(2)-acetyl-L-ornithine-binding site is contributed by Arg-144. 226–229 (DEVQ) contacts pyridoxal 5'-phosphate. Lys-255 is modified (N6-(pyridoxal phosphate)lysine). Ser-283 is a N(2)-acetyl-L-ornithine binding site. Thr-284 is a binding site for pyridoxal 5'-phosphate.

Belongs to the class-III pyridoxal-phosphate-dependent aminotransferase family. ArgD subfamily. As to quaternary structure, homodimer. Requires pyridoxal 5'-phosphate as cofactor.

It localises to the cytoplasm. The enzyme catalyses N(2)-acetyl-L-ornithine + 2-oxoglutarate = N-acetyl-L-glutamate 5-semialdehyde + L-glutamate. The catalysed reaction is N-succinyl-(2S,6S)-2,6-diaminopimelate + 2-oxoglutarate = (S)-2-succinylamino-6-oxoheptanedioate + L-glutamate. It participates in amino-acid biosynthesis; L-arginine biosynthesis; N(2)-acetyl-L-ornithine from L-glutamate: step 4/4. It functions in the pathway amino-acid biosynthesis; L-lysine biosynthesis via DAP pathway; LL-2,6-diaminopimelate from (S)-tetrahydrodipicolinate (succinylase route): step 2/3. Its function is as follows. Involved in both the arginine and lysine biosynthetic pathways. This is Acetylornithine/succinyldiaminopimelate aminotransferase from Escherichia coli O157:H7.